Reading from the N-terminus, the 84-residue chain is Small ribosomal subunit protein bS20 (84 aa).

This sequence belongs to the bacterial ribosomal protein bS20 family.

Its function is as follows. Binds directly to 16S ribosomal RNA. This Limosilactobacillus reuteri (strain DSM 20016) (Lactobacillus reuteri) protein is Small ribosomal subunit protein bS20.